The chain runs to 937 residues: Putative leucine-rich repeat receptor-like serine/threonine-protein kinase At3g53590 (937 aa).

The first 20 residues, 1-20, serve as a signal peptide directing secretion; it reads MIPPNINVLIRSICINLVTS. Residues 21-547 lie on the Extracellular side of the membrane; it reads LPLNFAYIFI…LLAQTSGIRT (527 aa). Residues N50, N63, N90, and N114 are each glycosylated (N-linked (GlcNAc...) asparagine). 8 LRR repeats span residues 102 to 126, 127 to 150, 152 to 173, 174 to 198, 200 to 222, 223 to 249, 251 to 270, and 271 to 294; these read LLYL…IGRI, SSLK…LGNL, NLNR…SFGN, LRSI…LSKL, KLVH…LAQL, PSLT…HFSR, VKLS…LSRI, and ENLS…KLSD. N162, N184, and N210 each carry an N-linked (GlcNAc...) asparagine glycan. Residues N272 and N295 are each glycosylated (N-linked (GlcNAc...) asparagine). 3 LRR repeats span residues 296–316, 317–341, and 343–360; these read MTTI…SFSD, LNSL…IWQD, and SFEN…NFSD. Residues N327, N357, N370, N413, N499, and N516 are each glycosylated (N-linked (GlcNAc...) asparagine). A helical membrane pass occupies residues 548–568; the sequence is IVWMMIVAGSVVAATVLSVTA. Over 569-937 the chain is Cytoplasmic; that stretch reads TLLYVRKRRE…SGFFHAVKPR (369 aa). The region spanning 614–886 is the Protein kinase domain; sequence FDSSTLIGRG…SKVVKELEGI (273 aa). ATP contacts are provided by residues 620–628 and K642; that span reads IGRGSYGKV. D738 acts as the Proton acceptor in catalysis.

Belongs to the protein kinase superfamily. Ser/Thr protein kinase family.

Its subcellular location is the cell membrane. The catalysed reaction is L-seryl-[protein] + ATP = O-phospho-L-seryl-[protein] + ADP + H(+). The enzyme catalyses L-threonyl-[protein] + ATP = O-phospho-L-threonyl-[protein] + ADP + H(+). The sequence is that of Putative leucine-rich repeat receptor-like serine/threonine-protein kinase At3g53590 from Arabidopsis thaliana (Mouse-ear cress).